A 60-amino-acid chain; its full sequence is Large ribosomal subunit protein bL32 (60 aa).

This sequence belongs to the bacterial ribosomal protein bL32 family.

The protein is Large ribosomal subunit protein bL32 of Geobacter sulfurreducens (strain ATCC 51573 / DSM 12127 / PCA).